The chain runs to 175 residues: Alkyl hydroperoxide reductase AhpD (175 aa).

C131 serves as the catalytic Proton donor. Residues C131 and C134 are joined by a disulfide bond. C134 serves as the catalytic Cysteine sulfenic acid (-SOH) intermediate.

Belongs to the AhpD family.

It carries out the reaction N(6)-[(R)-dihydrolipoyl]-L-lysyl-[lipoyl-carrier protein] + a hydroperoxide = N(6)-[(R)-lipoyl]-L-lysyl-[lipoyl-carrier protein] + an alcohol + H2O. Its function is as follows. Antioxidant protein with alkyl hydroperoxidase activity. Required for the reduction of the AhpC active site cysteine residues and for the regeneration of the AhpC enzyme activity. The polypeptide is Alkyl hydroperoxide reductase AhpD (Brucella anthropi (strain ATCC 49188 / DSM 6882 / CCUG 24695 / JCM 21032 / LMG 3331 / NBRC 15819 / NCTC 12168 / Alc 37) (Ochrobactrum anthropi)).